Reading from the N-terminus, the 284-residue chain is tRNA-cytidine(32) 2-sulfurtransferase (284 aa).

The PP-loop motif motif lies at 44-49 (SGGKDS). [4Fe-4S] cluster-binding residues include Cys-119, Cys-122, and Cys-210.

It belongs to the TtcA family. As to quaternary structure, homodimer. It depends on Mg(2+) as a cofactor. [4Fe-4S] cluster serves as cofactor.

It localises to the cytoplasm. It catalyses the reaction cytidine(32) in tRNA + S-sulfanyl-L-cysteinyl-[cysteine desulfurase] + AH2 + ATP = 2-thiocytidine(32) in tRNA + L-cysteinyl-[cysteine desulfurase] + A + AMP + diphosphate + H(+). It functions in the pathway tRNA modification. Its function is as follows. Catalyzes the ATP-dependent 2-thiolation of cytidine in position 32 of tRNA, to form 2-thiocytidine (s(2)C32). The sulfur atoms are provided by the cysteine/cysteine desulfurase (IscS) system. The protein is tRNA-cytidine(32) 2-sulfurtransferase of Chromohalobacter salexigens (strain ATCC BAA-138 / DSM 3043 / CIP 106854 / NCIMB 13768 / 1H11).